We begin with the raw amino-acid sequence, 542 residues long: Nuclear speckle splicing regulatory protein 1 (542 aa).

Positions 21–53 are disordered; the sequence is RVLQKPSVFGSDSDDDETSVSESLQREAAKKQA. Residues S27, S31, and S33 each carry the phosphoserine modification. Positions 103-172 form a coiled coil; that stretch reads IHNLLKAVEI…RAAALEAHLD (70 aa). A necessary for alternative splicing activity region spans residues 105–169; it reads NLLKAVEIRK…REKRAAALEA (65 aa). Positions 190–516 are disordered; the sequence is AVGEEAAPKS…FAKRSNEETV (327 aa). Residues K198 and K209 each participate in a glycyl lysine isopeptide (Lys-Gly) (interchain with G-Cter in SUMO2) cross-link. Basic and acidic residues predominate over residues 200–217; the sequence is SFREARTVIKEEKLRGYP. Residues 223-232 show a composition bias toward polar residues; the sequence is ESRPPQQSCV. A compositionally biased stretch (acidic residues) spans 239-256; the sequence is EAEENPDADREFDDESSE. Residues S254 and S255 each carry the phosphoserine modification. The segment covering 257 to 271 has biased composition (basic and acidic residues); sequence DGEKRDHKVKSRGED. An N6-acetyllysine modification is found at K277. Over residues 277-288 the composition is skewed to basic residues; sequence KHPKHHKNRAHS. A Glycyl lysine isopeptide (Lys-Gly) (interchain with G-Cter in SUMO2) cross-link involves residue K280. 3 stretches are compositionally biased toward basic and acidic residues: residues 309–335, 343–475, and 485–501; these read RGHE…EEKS, SHKD…KPSH, and RLAE…ERPP. Positions 372 to 413 form a coiled coil; the sequence is KREKYSSREQERDRQRNDHDRYSEKEKKRKEKEEHTKARRER. S443 carries the post-translational modification Phosphoserine.

This sequence belongs to the NSRP1 family. As to quaternary structure, interacts (via C-terminus) with SRSF1. Interacts (via C-terminus) with SRSF2.

The protein localises to the nucleus. It localises to the nucleus speckle. Functionally, RNA-binding protein that mediates pre-mRNA alternative splicing regulation. The sequence is that of Nuclear speckle splicing regulatory protein 1 (Nsrp1) from Mus musculus (Mouse).